The chain runs to 690 residues: Glycine--tRNA ligase beta subunit (690 aa).

This sequence belongs to the class-II aminoacyl-tRNA synthetase family. Tetramer of two alpha and two beta subunits.

The protein resides in the cytoplasm. It catalyses the reaction tRNA(Gly) + glycine + ATP = glycyl-tRNA(Gly) + AMP + diphosphate. This Syntrophus aciditrophicus (strain SB) protein is Glycine--tRNA ligase beta subunit.